A 633-amino-acid polypeptide reads, in one-letter code: Beta-myrcene synthase TPS15CT (633 aa).

A chloroplast-targeting transit peptide spans 1 to 55 (MHCMAVHQFSPSIVSSLPTISTYNNNHFCRFFTPKTSISPISKTKSKSSTCYPIQ). (2E)-geranyl diphosphate contacts are provided by R344, D381, D385, R525, and D528. Mg(2+) is bound by residues D381 and D385. The short motif at 381–385 (DDIYD) is the DDXXD motif element. Mg(2+) is bound by residues D528, T532, and E536.

The protein belongs to the terpene synthase family. Tpsb subfamily. The cofactor is Mg(2+). Requires Mn(2+) as cofactor.

The protein localises to the plastid. The protein resides in the chloroplast. The catalysed reaction is (2E)-geranyl diphosphate = beta-myrcene + diphosphate. The protein operates within secondary metabolite biosynthesis; terpenoid biosynthesis. In terms of biological role, involved in monoterpene (C10) olefins biosynthesis, constituants of cannabinoids and terpenoids-rich resins. Catalyzes strictly the conversion of (2E)-geranyl diphosphate to beta-myrcene. This chain is Beta-myrcene synthase TPS15CT, found in Cannabis sativa (Hemp).